We begin with the raw amino-acid sequence, 416 residues long: UDP-N-acetylglucosamine 1-carboxyvinyltransferase (416 aa).

A phosphoenolpyruvate-binding site is contributed by 22 to 23; that stretch reads KN. Arginine 92 serves as a coordination point for UDP-N-acetyl-alpha-D-glucosamine. The active-site Proton donor is cysteine 116. 2-(S-cysteinyl)pyruvic acid O-phosphothioketal is present on cysteine 116. Residues aspartate 304 and isoleucine 326 each contribute to the UDP-N-acetyl-alpha-D-glucosamine site.

It belongs to the EPSP synthase family. MurA subfamily.

The protein localises to the cytoplasm. The catalysed reaction is phosphoenolpyruvate + UDP-N-acetyl-alpha-D-glucosamine = UDP-N-acetyl-3-O-(1-carboxyvinyl)-alpha-D-glucosamine + phosphate. It participates in cell wall biogenesis; peptidoglycan biosynthesis. Cell wall formation. Adds enolpyruvyl to UDP-N-acetylglucosamine. This is UDP-N-acetylglucosamine 1-carboxyvinyltransferase from Solidesulfovibrio magneticus (strain ATCC 700980 / DSM 13731 / RS-1) (Desulfovibrio magneticus).